Consider the following 273-residue polypeptide: ATP synthase subunit a (273 aa).

Helical transmembrane passes span 42–62 (TLNI…LFIF), 102–122 (VIAP…MMDL), 148–168 (DVSI…FYSI), 213–233 (LFGN…LLPW), and 244–264 (AIFH…LTIV).

The protein belongs to the ATPase A chain family. F-type ATPases have 2 components, CF(1) - the catalytic core - and CF(0) - the membrane proton channel. CF(1) has five subunits: alpha(3), beta(3), gamma(1), delta(1), epsilon(1). CF(0) has three main subunits: a(1), b(2) and c(9-12). The alpha and beta chains form an alternating ring which encloses part of the gamma chain. CF(1) is attached to CF(0) by a central stalk formed by the gamma and epsilon chains, while a peripheral stalk is formed by the delta and b chains.

It is found in the cell inner membrane. Functionally, key component of the proton channel; it plays a direct role in the translocation of protons across the membrane. This Serratia proteamaculans (strain 568) protein is ATP synthase subunit a.